A 902-amino-acid polypeptide reads, in one-letter code: Phosphoenolpyruvate carboxylase (902 aa).

Residue His-132 is part of the active site. The interval 327–346 (DALERPEKTAGKKSSKRTPY) is disordered. Residue Lys-561 is part of the active site.

Belongs to the PEPCase type 1 family. Mg(2+) serves as cofactor.

The enzyme catalyses oxaloacetate + phosphate = phosphoenolpyruvate + hydrogencarbonate. Its function is as follows. Forms oxaloacetate, a four-carbon dicarboxylic acid source for the tricarboxylic acid cycle. This Corynebacterium diphtheriae (strain ATCC 700971 / NCTC 13129 / Biotype gravis) protein is Phosphoenolpyruvate carboxylase.